We begin with the raw amino-acid sequence, 403 residues long: S-adenosylmethionine synthase (403 aa).

Residue H15 coordinates ATP. D17 contributes to the Mg(2+) binding site. E43 is a binding site for K(+). L-methionine contacts are provided by E56 and Q99. Residues 99 to 109 (QSPDINQGVDR) form a flexible loop region. ATP-binding positions include 166-168 (DAK), 232-233 (KF), D241, 247-248 (RK), A264, and K268. Residue D241 coordinates L-methionine. K272 lines the L-methionine pocket.

Belongs to the AdoMet synthase family. Homotetramer; dimer of dimers. Mg(2+) is required as a cofactor. The cofactor is K(+).

It is found in the cytoplasm. It carries out the reaction L-methionine + ATP + H2O = S-adenosyl-L-methionine + phosphate + diphosphate. It participates in amino-acid biosynthesis; S-adenosyl-L-methionine biosynthesis; S-adenosyl-L-methionine from L-methionine: step 1/1. In terms of biological role, catalyzes the formation of S-adenosylmethionine (AdoMet) from methionine and ATP. The overall synthetic reaction is composed of two sequential steps, AdoMet formation and the subsequent tripolyphosphate hydrolysis which occurs prior to release of AdoMet from the enzyme. The chain is S-adenosylmethionine synthase from Xanthomonas axonopodis pv. citri (strain 306).